Reading from the N-terminus, the 648-residue chain is Mitochondrial Rho GTPase 3 (648 aa).

Topologically, residues 1–621 are cytoplasmic; the sequence is MWMGVGDSSG…KRSCKLNNRS (621 aa). The residue at position 11 (S11) is a Phosphoserine. Residues 12-179 enclose the Miro 1 domain; sequence PKPIRIVVVG…LYYAQKAVID (168 aa). EF-hand domains lie at 195-230 and 316-351; these read RCIAALKRIFLLSDHNMDGILSDEELNELQKKCFDT and VAIEFLREVYEFFDSNGDNNLEPHEMGYLFETAPES. 9 residues coordinate Ca(2+): D208, N210, D212, E219, D329, N331, D333, N335, and E340. The 175-residue stretch at 425 to 599 folds into the Miro 2 domain; it reads RKVVQCFVFG…FRKILTAAEN (175 aa). Residues 622–644 form a helical membrane-spanning segment; that stretch reads LMAVSIGTAVLIAGLASFRLYTA. The Mitochondrial intermembrane portion of the chain corresponds to 645-648; that stretch reads RKQS.

Belongs to the mitochondrial Rho GTPase family. In terms of tissue distribution, expressed at very low levels in roots, leaves, stems, flowers and siliques.

The protein resides in the mitochondrion outer membrane. Its function is as follows. Mitochondrial GTPase that may be involved in mitochondrion development. This is Mitochondrial Rho GTPase 3 from Arabidopsis thaliana (Mouse-ear cress).